The sequence spans 460 residues: UDP-N-acetylmuramate--L-alanine ligase (460 aa).

118–124 (GAHGKTT) contacts ATP.

It belongs to the MurCDEF family.

It localises to the cytoplasm. The catalysed reaction is UDP-N-acetyl-alpha-D-muramate + L-alanine + ATP = UDP-N-acetyl-alpha-D-muramoyl-L-alanine + ADP + phosphate + H(+). It functions in the pathway cell wall biogenesis; peptidoglycan biosynthesis. Cell wall formation. This is UDP-N-acetylmuramate--L-alanine ligase from Clostridium botulinum (strain Alaska E43 / Type E3).